The sequence spans 78 residues: Mandibular organ-inhibiting hormone 1 (78 aa).

Intrachain disulfides connect cysteine 7-cysteine 44, cysteine 24-cysteine 40, and cysteine 27-cysteine 53.

This sequence belongs to the arthropod CHH/MIH/GIH/VIH hormone family. As to expression, produced by the medulla terminalis X-organ in the eyestalks and transported to the sinus gland where it is stored and released.

Its subcellular location is the secreted. Functionally, represses the synthesis of methyl farnesoate, the precursor of insect juvenile hormone III in the mandibular organ. This chain is Mandibular organ-inhibiting hormone 1, found in Cancer pagurus (Rock crab).